Reading from the N-terminus, the 256-residue chain is Post-translational flagellin modification protein A (256 aa).

Ser-145 is a substrate binding site. Tyr-168 acts as the Proton acceptor in catalysis.

This sequence belongs to the short-chain dehydrogenases/reductases (SDR) family.

Its function is as follows. Required for biosynthesis of LAH modification in the post-translational modification of Campylobacter coli flagellin. The polypeptide is Post-translational flagellin modification protein A (ptmA) (Campylobacter coli).